A 2135-amino-acid polypeptide reads, in one-letter code: Nonribosomal peptide synthetase gliP (2135 aa).

An adenylation 1 region spans residues 34-424 (TYTELDVASS…LPADVEEPLR (391 aa)). Residues 519 to 594 (TEREQVIAEC…GILPYARDLA (76 aa)) enclose the Carrier 1 domain. Residue Ser-555 is modified to O-(pantetheine 4'-phosphoryl)serine. The condensation 1 stretch occupies residues 663-913 (AEHICNAWRQ…MATLPLVCRI (251 aa)). The tract at residues 1078–1458 (YRELDQKSNA…YQEEPRLTQA (381 aa)) is adenylation 2. The Carrier 2 domain occupies 1544–1622 (ASIADGIATL…EQVELVRRKR (79 aa)). Position 1582 is an O-(pantetheine 4'-phosphoryl)serine (Ser-1582). The interval 1642 to 1905 (SPLERQTWFQ…FLDRLPLRFK (264 aa)) is condensation 2. Positions 2061 to 2134 (RRLVGILQRE…DLAQRLYRQV (74 aa)) constitute a Carrier 3 domain. Ser-2095 carries the post-translational modification O-(pantetheine 4'-phosphoryl)serine.

Belongs to the NRP synthetase family.

The protein operates within mycotoxin biosynthesis. Functionally, nonribosomal peptide synthetase; part of the gene cluster that mediates the biosynthesis of gliotoxin, a member of the epipolythiodioxopiperazine (ETP) class of toxins characterized by a disulfide-bridged cyclic dipeptide. The first step in gliotoxin biosynthesis is the condensation of serine and phenylalanine to form the cyclo-L-phenylalanyl-L-serine diketopiperazine (DKP) by the NRPS gliP. GliP is also able to produce the DKP cyclo-L-tryptophanyl-L-serine, suggesting that the substrate specificity of the first adenylation (A) domain in gliP is sufficiently relaxed to accommodate both L-Phe and L-Trp. The cytochrome P450 monooxygenase gliC has been shown to catalyze the subsequent hydroxylation of the alpha-carbon of L-Phe in cyclo-L-phenylalanyl-L-serine whereas the second cytochrome P450 enzyme, gliF, is presumably involved in the modification of the DKP side chain. The glutathione S-transferase (GST) gliG then forms a bis-glutathionylated biosynthetic intermediate which is responsible for the sulfurization of gliotoxin. This bis-glutathionylated intermediate is subsequently processed by the gamma-glutamyl cyclotransferase gliK to remove both gamma-glutamyl moieties. Subsequent processing via gliI yields a biosynthetic intermediate, which is N-methylated via the N-methyltransferase gliN, before the gliotoxin oxidoreductase gliT-mediated disulfide bridge closure. GliN-mediated amide methylation confers stability to ETP, damping the spontaneous formation of tri- and tetrasulfides. Intracellular dithiol gliotoxin oxidized by gliT is subsequently effluxed by gliA. Gliotoxin contributes to pathogenesis during invasive aspergillosis. In macrophages and neutrophils, gliotoxin showed inhibition of various different cell functions including cytokine production, antigen presentation, phagocytosis, and production of reactive oxygen species. This chain is Nonribosomal peptide synthetase gliP, found in Aspergillus fumigatus (strain ATCC MYA-4609 / CBS 101355 / FGSC A1100 / Af293) (Neosartorya fumigata).